The sequence spans 104 residues: Large ribosomal subunit protein uL24 (104 aa).

It belongs to the universal ribosomal protein uL24 family. In terms of assembly, part of the 50S ribosomal subunit.

One of two assembly initiator proteins, it binds directly to the 5'-end of the 23S rRNA, where it nucleates assembly of the 50S subunit. In terms of biological role, one of the proteins that surrounds the polypeptide exit tunnel on the outside of the subunit. The chain is Large ribosomal subunit protein uL24 from Corynebacterium jeikeium (strain K411).